Reading from the N-terminus, the 195-residue chain is uncharacterized protein (195 aa).

4 helical membrane passes run 89–106 (SWIS…PLLP), 111–128 (HLPL…VWKR), 149–168 (VKIS…VLLL), and 172–194 (LNAL…FLNI).

The protein localises to the cell membrane. This is an uncharacterized protein from Bacillus subtilis (strain 168).